A 71-amino-acid chain; its full sequence is MKEGIHPNYEVVAVTCSCGNKFETRSTLGNVLSIDVCNLCHPFYTGKQKVLDTGGRVQKFADRFGMFGTKK.

Residues cysteine 16, cysteine 18, cysteine 37, and cysteine 40 each coordinate Zn(2+).

This sequence belongs to the bacterial ribosomal protein bL31 family. Type A subfamily. As to quaternary structure, part of the 50S ribosomal subunit. The cofactor is Zn(2+).

Binds the 23S rRNA. The polypeptide is Large ribosomal subunit protein bL31 (Pseudomonas putida (strain GB-1)).